Here is a 327-residue protein sequence, read N- to C-terminus: uncharacterized protein (327 aa).

Positions 12–79 constitute an S4 RNA-binding domain; it reads KRIDEFLAKE…LKKELDLEIE (68 aa). Asp-136 is a catalytic residue.

This sequence belongs to the pseudouridine synthase RluA family.

It catalyses the reaction a uridine in RNA = a pseudouridine in RNA. This is an uncharacterized protein from Helicobacter pylori (strain J99 / ATCC 700824) (Campylobacter pylori J99).